Here is a 501-residue protein sequence, read N- to C-terminus: Pyruvate kinase (501 aa).

Residue R50 participates in substrate binding. Positions 52, 54, 85, and 86 each coordinate K(+). 52 to 55 (NFSH) serves as a coordination point for ATP. Residues R92 and K178 each coordinate ATP. Residue E243 coordinates Mg(2+). Positions 266, 267, and 299 each coordinate substrate. Residue D267 coordinates Mg(2+).

The protein belongs to the pyruvate kinase family. As to quaternary structure, homotetramer. It depends on Mg(2+) as a cofactor. K(+) is required as a cofactor.

The catalysed reaction is pyruvate + ATP = phosphoenolpyruvate + ADP + H(+). It participates in carbohydrate degradation; glycolysis; pyruvate from D-glyceraldehyde 3-phosphate: step 5/5. The polypeptide is Pyruvate kinase (PYK1) (Naumovozyma castellii (Yeast)).